The chain runs to 273 residues: 2,3,4,5-tetrahydropyridine-2,6-dicarboxylate N-succinyltransferase (273 aa).

The substrate site is built by arginine 105 and aspartate 142.

It belongs to the transferase hexapeptide repeat family. Homotrimer.

It localises to the cytoplasm. The enzyme catalyses (S)-2,3,4,5-tetrahydrodipicolinate + succinyl-CoA + H2O = (S)-2-succinylamino-6-oxoheptanedioate + CoA. Its pathway is amino-acid biosynthesis; L-lysine biosynthesis via DAP pathway; LL-2,6-diaminopimelate from (S)-tetrahydrodipicolinate (succinylase route): step 1/3. In Bordetella avium (strain 197N), this protein is 2,3,4,5-tetrahydropyridine-2,6-dicarboxylate N-succinyltransferase.